Reading from the N-terminus, the 252-residue chain is Probable 6-phosphogluconolactonase 5 (252 aa).

Belongs to the glucosamine/galactosamine-6-phosphate isomerase family. 6-phosphogluconolactonase subfamily.

The protein resides in the cytoplasm. It is found in the cytosol. The enzyme catalyses 6-phospho-D-glucono-1,5-lactone + H2O = 6-phospho-D-gluconate + H(+). It functions in the pathway carbohydrate degradation; pentose phosphate pathway; D-ribulose 5-phosphate from D-glucose 6-phosphate (oxidative stage): step 2/3. Catalyzes the hydrolysis of 6-phosphogluconolactone to 6-phosphogluconate. This is Probable 6-phosphogluconolactonase 5 from Arabidopsis thaliana (Mouse-ear cress).